Here is a 201-residue protein sequence, read N- to C-terminus: Pyrrolidone-carboxylate peptidase (201 aa).

Catalysis depends on residues Glu-78, Cys-141, and His-165.

This sequence belongs to the peptidase C15 family. In terms of assembly, homotetramer.

The protein localises to the cytoplasm. The catalysed reaction is Release of an N-terminal pyroglutamyl group from a polypeptide, the second amino acid generally not being Pro.. Removes 5-oxoproline from various penultimate amino acid residues except L-proline. The chain is Pyrrolidone-carboxylate peptidase from Brachyspira hyodysenteriae (strain ATCC 49526 / WA1).